Consider the following 205-residue polypeptide: Polyamine-modulated factor 1 (205 aa).

The interval 1–30 (MAEASSANLGSGCEEKRHEGSSSESVPPGT) is disordered. Residues 141-193 (FLQQRDTLRRHVQKQEAENQQLADAVLAGRRQVEELQLQVQAQQQAWQALHRE) adopt a coiled-coil conformation.

In terms of assembly, component of the MIS12 complex composed of MIS12, DSN1, NSL1 and PMF1. Interacts with COPS7A. Interacts via its coiled-coil domain with the leucine-zipper domain of NFE2L2. The interaction with NFE2L2 is required for the transcriptional regulation of SSAT. In terms of tissue distribution, highest levels of expression in heart and skeletal muscle, with significant levels expressed in kidney and liver.

Its subcellular location is the nucleus. It localises to the chromosome. The protein localises to the centromere. The protein resides in the kinetochore. In terms of biological role, part of the MIS12 complex which is required for normal chromosome alignment and segregation and kinetochore formation during mitosis. May act as a cotranscription partner of NFE2L2 involved in regulation of polyamine-induced transcription of SSAT. This is Polyamine-modulated factor 1 from Homo sapiens (Human).